The following is a 799-amino-acid chain: Protein translocase subunit SecA (799 aa).

Residues Gln-85, 103–107, and Asp-504 contribute to the ATP site; that span reads GEGKT.

It belongs to the SecA family. As to quaternary structure, monomer and homodimer. Part of the essential Sec protein translocation apparatus which comprises SecA, SecYEG and auxiliary proteins SecDF. Other proteins may also be involved.

The protein localises to the cell membrane. It is found in the cytoplasm. It carries out the reaction ATP + H2O + cellular proteinSide 1 = ADP + phosphate + cellular proteinSide 2.. Part of the Sec protein translocase complex. Interacts with the SecYEG preprotein conducting channel. Has a central role in coupling the hydrolysis of ATP to the transfer of proteins into and across the cell membrane, serving as an ATP-driven molecular motor driving the stepwise translocation of polypeptide chains across the membrane. In Lactobacillus acidophilus (strain ATCC 700396 / NCK56 / N2 / NCFM), this protein is Protein translocase subunit SecA.